The following is a 531-amino-acid chain: NADH-quinone oxidoreductase subunit N (531 aa).

14 consecutive transmembrane segments (helical) span residues 8–28 (VEYF…AGVL), 41–61 (AQVT…IVVA), 81–101 (ATLF…VFMA), 146–166 (GATQ…MMVF), 172–192 (LLTM…MCGL), 208–228 (FLLG…LYGA), 250–270 (ALAG…AVPF), 282–302 (PTPI…GALL), 318–338 (PVLW…AVNQ), 350–370 (VAHV…GLSA), 372–392 (LFYL…VGLV), 418–438 (IVGV…LTSG), 453–473 (GAVP…YFYV), and 500–520 (AAIA…QPVL).

Belongs to the complex I subunit 2 family. In terms of assembly, NDH-1 is composed of 14 different subunits. Subunits NuoA, H, J, K, L, M, N constitute the membrane sector of the complex.

It localises to the cell membrane. The catalysed reaction is a quinone + NADH + 5 H(+)(in) = a quinol + NAD(+) + 4 H(+)(out). NDH-1 shuttles electrons from NADH, via FMN and iron-sulfur (Fe-S) centers, to quinones in the respiratory chain. The immediate electron acceptor for the enzyme in this species is believed to be a menaquinone. Couples the redox reaction to proton translocation (for every two electrons transferred, four hydrogen ions are translocated across the cytoplasmic membrane), and thus conserves the redox energy in a proton gradient. This is NADH-quinone oxidoreductase subunit N from Mycobacterium bovis (strain ATCC BAA-935 / AF2122/97).